The chain runs to 172 residues: ATP synthase subunit b (172 aa).

The helical transmembrane segment at 17 to 37 threads the bilayer; sequence IVFSAIVLAIVLPFFWWFVIP.

The protein belongs to the ATPase B chain family. In terms of assembly, F-type ATPases have 2 components, F(1) - the catalytic core - and F(0) - the membrane proton channel. F(1) has five subunits: alpha(3), beta(3), gamma(1), delta(1), epsilon(1). F(0) has three main subunits: a(1), b(2) and c(10-14). The alpha and beta chains form an alternating ring which encloses part of the gamma chain. F(1) is attached to F(0) by a central stalk formed by the gamma and epsilon chains, while a peripheral stalk is formed by the delta and b chains.

It is found in the cell membrane. In terms of biological role, f(1)F(0) ATP synthase produces ATP from ADP in the presence of a proton or sodium gradient. F-type ATPases consist of two structural domains, F(1) containing the extramembraneous catalytic core and F(0) containing the membrane proton channel, linked together by a central stalk and a peripheral stalk. During catalysis, ATP synthesis in the catalytic domain of F(1) is coupled via a rotary mechanism of the central stalk subunits to proton translocation. Its function is as follows. Component of the F(0) channel, it forms part of the peripheral stalk, linking F(1) to F(0). In Tropheryma whipplei (strain TW08/27) (Whipple's bacillus), this protein is ATP synthase subunit b.